Reading from the N-terminus, the 123-residue chain is Holo-[acyl-carrier-protein] synthase (123 aa).

The Mg(2+) site is built by Asp8 and Glu55.

This sequence belongs to the P-Pant transferase superfamily. AcpS family. Requires Mg(2+) as cofactor.

The protein localises to the cytoplasm. It carries out the reaction apo-[ACP] + CoA = holo-[ACP] + adenosine 3',5'-bisphosphate + H(+). Transfers the 4'-phosphopantetheine moiety from coenzyme A to a Ser of acyl-carrier-protein. This chain is Holo-[acyl-carrier-protein] synthase, found in Solidesulfovibrio magneticus (strain ATCC 700980 / DSM 13731 / RS-1) (Desulfovibrio magneticus).